A 545-amino-acid chain; its full sequence is Membrane protein insertase YidC (545 aa).

6 helical membrane-spanning segments follow: residues 10 to 30 (AVYL…FLFS), 319 to 339 (LLYF…NVIP), 341 to 361 (WGLS…PLTF), 407 to 427 (IGGC…YGLV), 467 to 487 (ILPF…SNVS), and 502 to 522 (MPIM…IYWI).

Belongs to the OXA1/ALB3/YidC family. Type 1 subfamily. In terms of assembly, interacts with the Sec translocase complex via SecD. Specifically interacts with transmembrane segments of nascent integral membrane proteins during membrane integration.

The protein localises to the cell inner membrane. Functionally, required for the insertion and/or proper folding and/or complex formation of integral membrane proteins into the membrane. Involved in integration of membrane proteins that insert both dependently and independently of the Sec translocase complex, as well as at least some lipoproteins. Aids folding of multispanning membrane proteins. This Borrelia duttonii (strain Ly) protein is Membrane protein insertase YidC.